The primary structure comprises 212 residues: Calaxin (212 aa).

3 EF-hand domains span residues 65–100, 101–136, and 146–181; these read TDDM…FLRG, TLEE…SLLK, and GIKD…ETLL. Ca(2+) is bound by residues Asp-78, Asp-80, Asp-82, Cys-84, Glu-89, Asp-114, Asn-116, Asp-118, Glu-125, Asp-159, Asp-161, Asp-163, Lys-165, and Asp-170.

As to quaternary structure, component of the outer dynein arm-docking complex along with ODAD1, ODAD2, ODAD3 and ODAD4. In terms of tissue distribution, expressed in trachea multiciliated cells.

It is found in the cytoplasm. The protein localises to the cytoskeleton. The protein resides in the cilium axoneme. It localises to the cell projection. Its subcellular location is the cilium. It is found in the flagellum. Functionally, component of the outer dynein arm-docking complex (ODA-DC) that mediates outer dynein arms (ODA) binding onto the doublet microtubule. Seems to regulate the assembly of both ODAs and their axonemal docking complex onto ciliary microtubules. Regulates ciliary and flagellar motility and is required for cilia-driven determination of body laterality. The polypeptide is Calaxin (CLXN) (Bos taurus (Bovine)).